A 1339-amino-acid chain; its full sequence is Transcription factor tau subunit sfc3 (1339 aa).

Residues M470–S515 are disordered. The segment at residues P485–I497 is a DNA-binding region (a.T hook). Positions A495 to P514 are enriched in polar residues. 2 positions are modified to phosphoserine: S595 and S596. Positions R791 to P826 are disordered. Positions E798–P826 are enriched in basic and acidic residues.

In terms of assembly, component of the TFIIIC complex including sfc1, sfc3, sfc4, sfc6 and sfc7. The subunits are organized in two globular domains, tauA and tauB, connected by a proteolysis-sensitive and flexible linker. Interacts with sfc1, sfc4 and sfc6.

It is found in the nucleus envelope. Its function is as follows. TFIIIC mediates tRNA and 5S RNA gene activation by binding to intragenic promoter elements. Upstream of the transcription start site, TFIIIC assembles the initiation complex TFIIIB-TFIIIC-tDNA, which is sufficient for RNA polymerase III recruitment and function. Part of the tauB domain of TFIIIC that binds boxB DNA promoter sites of tRNA and similar genes. Cooperates with sfc6 in DNA binding. Localizes to chromatin insulator sequence without recruiting RNA polymerase III and plays a role in nuclear organization. This chain is Transcription factor tau subunit sfc3, found in Schizosaccharomyces pombe (strain 972 / ATCC 24843) (Fission yeast).